Consider the following 382-residue polypeptide: Sphingoid long-chain base transporter RSB1 (382 aa).

Over 1 to 34 (MSNATNNTLGSLLPQLEAAANSNSLYGGMVPNLR) the chain is Extracellular. N-linked (GlcNAc...) asparagine glycans are attached at residues asparagine 3 and asparagine 6. Residues 35–55 (FNITMIVIWGILLTIHVVQLL) traverse the membrane as a helical segment. Residues 56–57 (MR) lie on the Cytoplasmic side of the membrane. Residues 58–78 (QYWFSIAFICTGILEVLGFIG) form a helical membrane-spanning segment. The Extracellular portion of the chain corresponds to 79-90 (RTWSHSNVADMD). Residues 91 to 111 (AFLLNMICLTIAPVFTMGGIY) traverse the membrane as a helical segment. Over 112–135 (YQLAKLIEVYGHRFSLLPSPMAYS) the chain is Cytoplasmic. Residues 136–156 (FIFICSDIVSLVVQAVGGGLC) form a helical membrane-spanning segment. Residues 157 to 171 (GVAVTDGTSTTTGNH) are Extracellular-facing. The helical transmembrane segment at 172–192 (VFIAGLAIQVASMAIFLMLWF) threads the bilayer. The Cytoplasmic portion of the chain corresponds to 193-241 (HFLFRIYISVRWEHINSRPISLSLLKISQTEVDYLYREKFHFLRLEPKR). The helical transmembrane segment at 242–262 (WVFHYFNLAITVAVLTIFTRC) threads the bilayer. The Extracellular segment spans residues 263–281 (CYRLAELVVGWDGYLITHE). A helical transmembrane segment spans residues 282–302 (WYFIILDALMMAIATVTLTIF). The Cytoplasmic portion of the chain corresponds to 303–382 (HPGFAFKGRS…LFSSKKKAKL (80 aa)).

The protein belongs to the lipid-translocating exporter (LTE) (TC 9.A.26.1) family.

Its subcellular location is the cell membrane. Catalyzes the ATP-dependent translocation of sphingoid long-chain bases (LCBs) from the cytoplasmic site toward the extracytoplasmic side of the membrane (flip-flop). Involved in the establishment of the functional lipid asymmetry of the plasma membrane. Regulates intracellular levels of LCBs, sphingolipid precursors that are growth inhibitory at increased levels. The chain is Sphingoid long-chain base transporter RSB1 (RSB1) from Saccharomyces cerevisiae (strain ATCC 204508 / S288c) (Baker's yeast).